Reading from the N-terminus, the 300-residue chain is Bifunctional protein FolD (300 aa).

NADP(+) contacts are provided by residues 172–174, S206, and I247; that span reads GRS.

This sequence belongs to the tetrahydrofolate dehydrogenase/cyclohydrolase family. As to quaternary structure, homodimer.

It catalyses the reaction (6R)-5,10-methylene-5,6,7,8-tetrahydrofolate + NADP(+) = (6R)-5,10-methenyltetrahydrofolate + NADPH. The catalysed reaction is (6R)-5,10-methenyltetrahydrofolate + H2O = (6R)-10-formyltetrahydrofolate + H(+). It participates in one-carbon metabolism; tetrahydrofolate interconversion. Functionally, catalyzes the oxidation of 5,10-methylenetetrahydrofolate to 5,10-methenyltetrahydrofolate and then the hydrolysis of 5,10-methenyltetrahydrofolate to 10-formyltetrahydrofolate. The protein is Bifunctional protein FolD of Rhodopirellula baltica (strain DSM 10527 / NCIMB 13988 / SH1).